Here is a 93-residue protein sequence, read N- to C-terminus: GWPAYPGRNGIRSSVCQKKLGCGWRKLASLPVCKAFCLARKRFWQKCGKNGSSGKGSKICKSVIAHTFEKAGKGLIKLTDMAVATIIKYAGKK.

Intrachain disulfides connect cysteine 16-cysteine 37, cysteine 22-cysteine 33, and cysteine 47-cysteine 60.

The protein belongs to the worm cytolysin family. Localized within the skin and proboscis and are most readily isolated from body mucus secretions.

It localises to the secreted. Functionally, cytolysin that shows hemolytic activity (on bovine erythrocytes, HC(50)=5.75 mg/ml). This hemolytic activity is completely inhibited by small unilamelar vesicles composed of PC/PG, PC/PI and PC/PS in 1:1 molar ratios (with at least 100 mg/ml concentration). The recombinant protein does not show hemolytic activity, suggesting that it is not properly folded or that it requires a free N-terminal end for its activity. This chain is Parbolysin P1, found in Parborlasia corrugatus (Antarctic nemertean worm).